We begin with the raw amino-acid sequence, 164 residues long: ATP synthase subunit b (164 aa).

Residues I4–L24 form a helical membrane-spanning segment.

The protein belongs to the ATPase B chain family. As to quaternary structure, F-type ATPases have 2 components, F(1) - the catalytic core - and F(0) - the membrane proton channel. F(1) has five subunits: alpha(3), beta(3), gamma(1), delta(1), epsilon(1). F(0) has three main subunits: a(1), b(2) and c(10-14). The alpha and beta chains form an alternating ring which encloses part of the gamma chain. F(1) is attached to F(0) by a central stalk formed by the gamma and epsilon chains, while a peripheral stalk is formed by the delta and b chains.

Its subcellular location is the cell membrane. Functionally, f(1)F(0) ATP synthase produces ATP from ADP in the presence of a proton or sodium gradient. F-type ATPases consist of two structural domains, F(1) containing the extramembraneous catalytic core and F(0) containing the membrane proton channel, linked together by a central stalk and a peripheral stalk. During catalysis, ATP synthesis in the catalytic domain of F(1) is coupled via a rotary mechanism of the central stalk subunits to proton translocation. Component of the F(0) channel, it forms part of the peripheral stalk, linking F(1) to F(0). The polypeptide is ATP synthase subunit b (Desulfitobacterium hafniense (strain Y51)).